The following is a 385-amino-acid chain: uncharacterized protein (385 aa).

Residue lysine 194 is modified to N6-(pyridoxal phosphate)lysine.

This sequence belongs to the class-V pyridoxal-phosphate-dependent aminotransferase family. Pyridoxal 5'-phosphate serves as cofactor.

This is an uncharacterized protein from Methanocaldococcus jannaschii (strain ATCC 43067 / DSM 2661 / JAL-1 / JCM 10045 / NBRC 100440) (Methanococcus jannaschii).